We begin with the raw amino-acid sequence, 1019 residues long: Outer capsid protein P3 (1019 aa).

Belongs to the phytoreovirus inner capsid protein P3 family. As to quaternary structure, homodimer. Homomultimer.

It localises to the virion. It is found in the host cytoplasm. Its function is as follows. Capsid protein which self-assembles to form the inner icosahedral capsid with a T=2 symmetry, and consisting of 60 P3 dimers. The protein is Outer capsid protein P3 of Rice dwarf virus (isolate Fujian) (RDV).